The primary structure comprises 338 residues: Homoserine kinase (338 aa).

The protein belongs to the GHMP kinase family. Homoserine kinase subfamily.

It carries out the reaction L-homoserine + ATP = O-phospho-L-homoserine + ADP + H(+). It participates in amino-acid biosynthesis; L-threonine biosynthesis; L-threonine from L-aspartate: step 4/5. Commits homoserine to the threonine biosynthesis pathway by catalyzing its O-phosphorylation. This chain is Homoserine kinase, found in Schizosaccharomyces pombe (strain 972 / ATCC 24843) (Fission yeast).